The primary structure comprises 239 residues: Ribonuclease HII (239 aa).

The 192-residue stretch at 30 to 221 folds into the RNase H type-2 domain; the sequence is GPVAGVDEVG…VRRLVTAGTP (192 aa). A divalent metal cation is bound by residues aspartate 36, glutamate 37, and aspartate 130.

The protein belongs to the RNase HII family. Mn(2+) is required as a cofactor. Requires Mg(2+) as cofactor.

It is found in the cytoplasm. The catalysed reaction is Endonucleolytic cleavage to 5'-phosphomonoester.. Endonuclease that specifically degrades the RNA of RNA-DNA hybrids. The polypeptide is Ribonuclease HII (Mycobacterium sp. (strain JLS)).